A 134-amino-acid polypeptide reads, in one-letter code: Small ribosomal subunit protein uS9 (134 aa).

Residues 109–134 are disordered; the sequence is KGDPRRKEPKKFGGRGARARRQKSYR. Residues 115 to 134 show a composition bias toward basic residues; sequence KEPKKFGGRGARARRQKSYR.

Belongs to the universal ribosomal protein uS9 family.

The polypeptide is Small ribosomal subunit protein uS9 (Methanopyrus kandleri (strain AV19 / DSM 6324 / JCM 9639 / NBRC 100938)).